The sequence spans 340 residues: Ketol-acid reductoisomerase (NADP(+)) (340 aa).

Positions 3–183 (INVFYDKDCN…GGGRTGIIET (181 aa)) constitute a KARI N-terminal Rossmann domain. Residues 26-29 (FGSQ), R49, S54, and 84-87 (DENQ) contribute to the NADP(+) site. The active site involves H109. G135 lines the NADP(+) pocket. One can recognise a KARI C-terminal knotted domain in the interval 184–329 (TFKDETETDL…VKLRNMMPWI (146 aa)). Residues D192, E196, E228, and E232 each contribute to the Mg(2+) site. S253 is a substrate binding site.

Belongs to the ketol-acid reductoisomerase family. It depends on Mg(2+) as a cofactor.

It carries out the reaction (2R)-2,3-dihydroxy-3-methylbutanoate + NADP(+) = (2S)-2-acetolactate + NADPH + H(+). The catalysed reaction is (2R,3R)-2,3-dihydroxy-3-methylpentanoate + NADP(+) = (S)-2-ethyl-2-hydroxy-3-oxobutanoate + NADPH + H(+). It participates in amino-acid biosynthesis; L-isoleucine biosynthesis; L-isoleucine from 2-oxobutanoate: step 2/4. The protein operates within amino-acid biosynthesis; L-valine biosynthesis; L-valine from pyruvate: step 2/4. Functionally, involved in the biosynthesis of branched-chain amino acids (BCAA). Catalyzes an alkyl-migration followed by a ketol-acid reduction of (S)-2-acetolactate (S2AL) to yield (R)-2,3-dihydroxy-isovalerate. In the isomerase reaction, S2AL is rearranged via a Mg-dependent methyl migration to produce 3-hydroxy-3-methyl-2-ketobutyrate (HMKB). In the reductase reaction, this 2-ketoacid undergoes a metal-dependent reduction by NADPH to yield (R)-2,3-dihydroxy-isovalerate. This Aliarcobacter butzleri (strain RM4018) (Arcobacter butzleri) protein is Ketol-acid reductoisomerase (NADP(+)).